The sequence spans 193 residues: ATP-dependent Clp protease proteolytic subunit (193 aa).

S98 (nucleophile) is an active-site residue. The active site involves H123.

This sequence belongs to the peptidase S14 family. Fourteen ClpP subunits assemble into 2 heptameric rings which stack back to back to give a disk-like structure with a central cavity, resembling the structure of eukaryotic proteasomes.

It localises to the cytoplasm. It carries out the reaction Hydrolysis of proteins to small peptides in the presence of ATP and magnesium. alpha-casein is the usual test substrate. In the absence of ATP, only oligopeptides shorter than five residues are hydrolyzed (such as succinyl-Leu-Tyr-|-NHMec, and Leu-Tyr-Leu-|-Tyr-Trp, in which cleavage of the -Tyr-|-Leu- and -Tyr-|-Trp bonds also occurs).. In terms of biological role, cleaves peptides in various proteins in a process that requires ATP hydrolysis. Has a chymotrypsin-like activity. Plays a major role in the degradation of misfolded proteins. This chain is ATP-dependent Clp protease proteolytic subunit, found in Agathobacter rectalis (strain ATCC 33656 / DSM 3377 / JCM 17463 / KCTC 5835 / VPI 0990) (Eubacterium rectale).